A 181-amino-acid polypeptide reads, in one-letter code: 3-hexulose-6-phosphate isomerase (181 aa).

The 142-residue stretch at 27-168 folds into the SIS domain; the sequence is ILSLVDAAGR…IAKLVDQKGL (142 aa). Substrate contacts are provided by residues Ser-45 and 84 to 89; that span reads SGSGST. Catalysis depends on Glu-148, which acts as the Proton acceptor.

This sequence belongs to the SIS family. PHI subfamily. Homodimer.

The catalysed reaction is D-arabino-hex-3-ulose 6-phosphate = beta-D-fructose 6-phosphate. It participates in one-carbon metabolism; formaldehyde assimilation via RuMP pathway; D-fructose 6-phosphate from D-ribulose 5-phosphate and formaldehyde: step 2/2. In terms of biological role, catalyzes the isomerization between 3-hexulose 6-phosphate and fructose 6-phosphate. The chain is 3-hexulose-6-phosphate isomerase (rmpB) from Methylomonas aminofaciens.